Here is a 361-residue protein sequence, read N- to C-terminus: Chorismate synthase (361 aa).

Residues Arg-48 and Arg-54 each coordinate NADP(+). FMN is bound by residues 125–127 (RSS), 238–239 (NA), Gly-278, 293–297 (KPTSS), and Arg-319.

It belongs to the chorismate synthase family. As to quaternary structure, homotetramer. FMNH2 serves as cofactor.

It catalyses the reaction 5-O-(1-carboxyvinyl)-3-phosphoshikimate = chorismate + phosphate. It functions in the pathway metabolic intermediate biosynthesis; chorismate biosynthesis; chorismate from D-erythrose 4-phosphate and phosphoenolpyruvate: step 7/7. Catalyzes the anti-1,4-elimination of the C-3 phosphate and the C-6 proR hydrogen from 5-enolpyruvylshikimate-3-phosphate (EPSP) to yield chorismate, which is the branch point compound that serves as the starting substrate for the three terminal pathways of aromatic amino acid biosynthesis. This reaction introduces a second double bond into the aromatic ring system. The sequence is that of Chorismate synthase from Yersinia pseudotuberculosis serotype IB (strain PB1/+).